The chain runs to 328 residues: 3-dehydroquinate synthase (328 aa).

Belongs to the archaeal-type DHQ synthase family.

The enzyme catalyses 2-amino-2,3,7-trideoxy-D-lyxo-hept-6-ulosonate + NAD(+) + H2O = 3-dehydroquinate + NH4(+) + NADH + H(+). Catalyzes the oxidative deamination and cyclization of 2-amino-3,7-dideoxy-D-threo-hept-6-ulosonic acid (ADH) to yield 3-dehydroquinate (DHQ), which is fed into the canonical shikimic pathway of aromatic amino acid biosynthesis. The chain is 3-dehydroquinate synthase from Methanoculleus marisnigri (strain ATCC 35101 / DSM 1498 / JR1).